The sequence spans 126 residues: Small ribosomal subunit protein eS24 (126 aa).

Residues 98-126 (LYTKPQTSRKQRKEKKNRLKKAGKKTAKK) are disordered. Residues 104–126 (TSRKQRKEKKNRLKKAGKKTAKK) show a composition bias toward basic residues.

The protein belongs to the eukaryotic ribosomal protein eS24 family.

This is Small ribosomal subunit protein eS24 (rps24) from Dictyostelium discoideum (Social amoeba).